The following is a 152-amino-acid chain: Protein Smg homolog (152 aa).

This sequence belongs to the Smg family.

This Bordetella bronchiseptica (strain ATCC BAA-588 / NCTC 13252 / RB50) (Alcaligenes bronchisepticus) protein is Protein Smg homolog.